A 303-amino-acid chain; its full sequence is Glycine--tRNA ligase alpha subunit (303 aa).

This sequence belongs to the class-II aminoacyl-tRNA synthetase family. Tetramer of two alpha and two beta subunits.

It is found in the cytoplasm. It catalyses the reaction tRNA(Gly) + glycine + ATP = glycyl-tRNA(Gly) + AMP + diphosphate. This is Glycine--tRNA ligase alpha subunit from Erwinia tasmaniensis (strain DSM 17950 / CFBP 7177 / CIP 109463 / NCPPB 4357 / Et1/99).